Here is a 323-residue protein sequence, read N- to C-terminus: Peroxidase 16 (323 aa).

An N-terminal signal peptide occupies residues 1-23 (MKNQSSFSIVALLLIFFSSSVFA). Cystine bridges form between C34/C113, C67/C72, C119/C319, and C198/C230. Residue H65 is the Proton acceptor of the active site. Residues D66, V69, G71, D73, and S75 each coordinate Ca(2+). P161 contributes to the substrate binding site. H191 provides a ligand contact to heme b. Position 192 (T192) interacts with Ca(2+). The Ca(2+) site is built by D243, S246, and D251.

This sequence belongs to the peroxidase family. Classical plant (class III) peroxidase subfamily. The cofactor is heme b. It depends on Ca(2+) as a cofactor. In terms of tissue distribution, expressed in the whole plant, but preferentially in roots and leaves.

The protein resides in the secreted. It catalyses the reaction 2 a phenolic donor + H2O2 = 2 a phenolic radical donor + 2 H2O. Its function is as follows. Removal of H(2)O(2), oxidation of toxic reductants, biosynthesis and degradation of lignin, suberization, auxin catabolism, response to environmental stresses such as wounding, pathogen attack and oxidative stress. These functions might be dependent on each isozyme/isoform in each plant tissue. In Arabidopsis thaliana (Mouse-ear cress), this protein is Peroxidase 16 (PER16).